Reading from the N-terminus, the 333-residue chain is CMP-N-acetylneuraminate-beta-galactosamide-alpha-2,3-sialyltransferase 4 (333 aa).

Topologically, residues 1 to 8 (MVSKSRWK) are cytoplasmic. The chain crosses the membrane as a helical; Signal-anchor for type II membrane protein span at residues 9-26 (LLAMLALVLVVMVWYSIS). The Lumenal segment spans residues 27–333 (REDRYIELFY…MGAIKNLTSF (307 aa)). Asn-61, Asn-131, Asn-310, and Asn-329 each carry an N-linked (GlcNAc...) asparagine glycan. A disulfide bridge links Cys-120 with Cys-273.

This sequence belongs to the glycosyltransferase 29 family. The soluble form derives from the membrane form by proteolytic processing. As to expression, highly expressed in adult placenta, heart and kidney.

The protein localises to the golgi apparatus. It is found in the golgi stack membrane. The protein resides in the secreted. The enzyme catalyses a beta-D-galactosyl-(1-&gt;3)-N-acetyl-beta-D-galactosaminyl derivative + CMP-N-acetyl-beta-neuraminate = an N-acetyl-alpha-neuraminyl-(2-&gt;3)-beta-D-galactosyl-(1-&gt;3)-N-acetyl-beta-D-galactosaminyl derivative + CMP + H(+). It catalyses the reaction a beta-D-galactosyl-(1-&gt;3)-N-acetyl-alpha-D-galactosaminyl derivative + CMP-N-acetyl-beta-neuraminate = an N-acetyl-alpha-neuraminyl-(2-&gt;3)-beta-D-galactosyl-(1-&gt;3)-N-acetyl-alpha-D-galactosaminyl derivative + CMP + H(+). It carries out the reaction a beta-D-galactosyl-(1-&gt;4)-N-acetyl-beta-D-glucosaminyl derivative + CMP-N-acetyl-beta-neuraminate = an N-acetyl-alpha-neuraminyl-(2-&gt;3)-beta-D-galactosyl-(1-&gt;4)-N-acetyl-beta-D-glucosaminyl derivative + CMP + H(+). The catalysed reaction is a ganglioside GM1 (d18:1(4E)) + CMP-N-acetyl-beta-neuraminate = a ganglioside GD1a (d18:1(4E)) + CMP + H(+). The enzyme catalyses a ganglioside GA1 (d18:1(4E)) + CMP-N-acetyl-beta-neuraminate = a ganglioside GM1b (d18:1(4E)) + CMP + H(+). It catalyses the reaction a ganglioside GT1c (d18:1(4E)) + CMP-N-acetyl-beta-neuraminate = a ganglioside GQ1c (d18:1(4E)) + CMP + H(+). It carries out the reaction a neolactoside nLc4Cer + CMP-N-acetyl-beta-neuraminate = a neolactoside IV(3)-alpha-NeuAc-nLc4Cer + CMP + H(+). The catalysed reaction is a neolactoside nLc4Cer(d18:1(4E)) + CMP-N-acetyl-beta-neuraminate = a neolactoside IV(3)-alpha-NeuAc-nLc4Cer(d18:1(4E)) + CMP + H(+). It functions in the pathway protein modification; protein glycosylation. The protein operates within glycolipid biosynthesis. Its function is as follows. A beta-galactoside alpha2-3 sialyltransferase involved in terminal sialylation of glycoproteins and glycolipids. Catalyzes the transfer of sialic acid (N-acetyl-neuraminic acid; Neu5Ac) from the nucleotide sugar donor CMP-Neu5Ac onto acceptor Galbeta-(1-&gt;3)-GalNAc- and Galbeta-(1-&gt;4)-GlcNAc-terminated glycoconjugates through an alpha2-3 linkage. Plays a major role in hemostasis. Responsible for sialylation of plasma VWF/von Willebrand factor, preventing its recognition by asialoglycoprotein receptors (ASGPR) and subsequent clearance. Regulates ASGPR-mediated clearance of platelets. Participates in the biosynthesis of the sialyl Lewis X epitopes, both on O- and N-glycans, which are recognized by SELE/E-selectin, SELP/P-selectin and SELL/L-selectin. Essential for selectin-mediated rolling and adhesion of leukocytes during extravasation. Contributes to adhesion and transendothelial migration of neutrophils likely through terminal sialylation of CXCR2. In glycosphingolipid biosynthesis, sialylates GM1 and GA1 gangliosides to form GD1a and GM1b, respectively. Metabolizes brain c-series ganglioside GT1c forming GQ1c. Synthesizes ganglioside LM1 (IV3Neu5Ac-nLc4Cer), a major structural component of peripheral nerve myelin. In Homo sapiens (Human), this protein is CMP-N-acetylneuraminate-beta-galactosamide-alpha-2,3-sialyltransferase 4 (ST3GAL4).